The following is a 246-amino-acid chain: Trypsin V-A (246 aa).

An N-terminal signal peptide occupies residues 1-15 (MKICIFFTLLGTVAA). Residues 16 to 24 (FPTEDNDDR) constitute a propeptide, activation peptide. One can recognise a Peptidase S1 domain in the interval 25-244 (IVGGYTCQEH…YLNWIHQTIA (220 aa)). Disulfide bonds link cysteine 31-cysteine 160, cysteine 49-cysteine 65, cysteine 133-cysteine 233, cysteine 140-cysteine 206, cysteine 171-cysteine 185, and cysteine 196-cysteine 220. Catalysis depends on histidine 64, which acts as the Charge relay system. The Ca(2+) site is built by glutamate 76, asparagine 78, and glutamate 86. Aspartate 108 acts as the Charge relay system in catalysis. Serine 200 (charge relay system) is an active-site residue.

This sequence belongs to the peptidase S1 family. Ca(2+) serves as cofactor.

The protein localises to the secreted. Its subcellular location is the extracellular space. It carries out the reaction Preferential cleavage: Arg-|-Xaa, Lys-|-Xaa.. This chain is Trypsin V-A, found in Rattus norvegicus (Rat).